We begin with the raw amino-acid sequence, 175 residues long: Bcl-2-related protein A1 (175 aa).

Positions 77–97 (KEFEDGIINWGRIVTIFAFEG) match the BH1 motif. Positions 132–147 (EWIRQNGGWENGFVKK) match the BH2 motif.

Belongs to the Bcl-2 family. Interacts directly with BAK1, BID, BMF and BBC3. Interacts directly with BCL2L11/BIM. Interacts with BAX isoform Sigma. Interacts directly with PMAIP1. Interacts with RTL10/BOP. Interacts with ING4. Interacts with UBQLN4. Seems to be restricted to the hematopoietic compartment. Expressed in peripheral blood, spleen, and bone marrow, at moderate levels in lung, small intestine and testis, at a minimal levels in other tissues. Also found in vascular smooth muscle cells and hematopoietic malignancies.

It localises to the cytoplasm. Its function is as follows. Retards apoptosis induced by IL-3 deprivation. May function in the response of hemopoietic cells to external signals and in maintaining endothelial survival during infection. Can inhibit apoptosis induced by serum starvation in the mammary epithelial cell line HC11. The protein is Bcl-2-related protein A1 (BCL2A1) of Homo sapiens (Human).